A 169-amino-acid polypeptide reads, in one-letter code: PTS system glucose-specific EIIA component (169 aa).

Residues 39–143 (DVVFAEKIVG…STLTPVVISN (105 aa)) enclose the PTS EIIA type-1 domain. The Zn(2+) site is built by H76 and H91. H91 (tele-phosphohistidine intermediate; for EIIA activity) is an active-site residue. H91 carries the post-translational modification Phosphohistidine; by HPr.

In terms of assembly, heterodimer with glycerol kinase (glpk). Requires Zn(2+) as cofactor.

The protein resides in the cytoplasm. Its function is as follows. The phosphoenolpyruvate-dependent sugar phosphotransferase system (sugar PTS), a major carbohydrate active transport system, catalyzes the phosphorylation of incoming sugar substrates concomitantly with their translocation across the cell membrane. The enzyme II complex composed of PtsG and Crr is involved in glucose transport. The protein is PTS system glucose-specific EIIA component (crr) of Escherichia coli O6:H1 (strain CFT073 / ATCC 700928 / UPEC).